The following is a 353-amino-acid chain: Photosystem II protein D1 (353 aa).

The residue at position 2 (Thr-2) is an N-acetylthreonine. Thr-2 bears the Phosphothreonine mark. A run of 3 helical transmembrane segments spans residues 29-46 (YIGWFGVLMIPTLLTATS), 118-133 (HFLLGVACYMGREWEL), and 142-156 (WIAVAYSAPVAAATA). His-118 provides a ligand contact to chlorophyll a. Tyr-126 is a pheophytin a binding site. 2 residues coordinate [CaMn4O5] cluster: Asp-170 and Glu-189. The helical transmembrane segment at 197–218 (FHMLGVAGVFGGSLFSAMHGSL) threads the bilayer. His-198 serves as a coordination point for chlorophyll a. Residues His-215 and 264–265 (SF) contribute to the a quinone site. His-215 is a binding site for Fe cation. Position 272 (His-272) interacts with Fe cation. Residues 274-288 (FLAAWPVVGIWFTAL) form a helical membrane-spanning segment. Positions 332, 333, 342, and 344 each coordinate [CaMn4O5] cluster. Positions 345 to 353 (AVEAPAVNG) are excised as a propeptide.

This sequence belongs to the reaction center PufL/M/PsbA/D family. PSII is composed of 1 copy each of membrane proteins PsbA, PsbB, PsbC, PsbD, PsbE, PsbF, PsbH, PsbI, PsbJ, PsbK, PsbL, PsbM, PsbT, PsbX, PsbY, PsbZ, Psb30/Ycf12, at least 3 peripheral proteins of the oxygen-evolving complex and a large number of cofactors. It forms dimeric complexes. It depends on The D1/D2 heterodimer binds P680, chlorophylls that are the primary electron donor of PSII, and subsequent electron acceptors. It shares a non-heme iron and each subunit binds pheophytin, quinone, additional chlorophylls, carotenoids and lipids. D1 provides most of the ligands for the Mn4-Ca-O5 cluster of the oxygen-evolving complex (OEC). There is also a Cl(-1) ion associated with D1 and D2, which is required for oxygen evolution. The PSII complex binds additional chlorophylls, carotenoids and specific lipids. as a cofactor. Post-translationally, tyr-161 forms a radical intermediate that is referred to as redox-active TyrZ, YZ or Y-Z. C-terminally processed by CTPA; processing is essential to allow assembly of the oxygen-evolving complex and thus photosynthetic growth.

It localises to the plastid. The protein resides in the chloroplast thylakoid membrane. It carries out the reaction 2 a plastoquinone + 4 hnu + 2 H2O = 2 a plastoquinol + O2. Its function is as follows. Photosystem II (PSII) is a light-driven water:plastoquinone oxidoreductase that uses light energy to abstract electrons from H(2)O, generating O(2) and a proton gradient subsequently used for ATP formation. It consists of a core antenna complex that captures photons, and an electron transfer chain that converts photonic excitation into a charge separation. The D1/D2 (PsbA/PsbD) reaction center heterodimer binds P680, the primary electron donor of PSII as well as several subsequent electron acceptors. The sequence is that of Photosystem II protein D1 from Marchantia polymorpha (Common liverwort).